The sequence spans 131 residues: Large ribosomal subunit protein bL17 (131 aa).

Belongs to the bacterial ribosomal protein bL17 family. In terms of assembly, part of the 50S ribosomal subunit. Contacts protein L32.

This Shewanella frigidimarina (strain NCIMB 400) protein is Large ribosomal subunit protein bL17.